A 63-amino-acid polypeptide reads, in one-letter code: MIVVPLKEGENIEKALKKFKRKFEKTGVVKELRGRQAFEKPSVTKRKQTMRAIYVQHLQQVEE.

It belongs to the bacterial ribosomal protein bS21 family.

In Parabacteroides distasonis (strain ATCC 8503 / DSM 20701 / CIP 104284 / JCM 5825 / NCTC 11152), this protein is Small ribosomal subunit protein bS21.